A 102-amino-acid polypeptide reads, in one-letter code: Large ribosomal subunit protein bL28 (102 aa).

The segment at 1–20 (MSRRCELTAKGPQVGHKVSH) is disordered.

This sequence belongs to the bacterial ribosomal protein bL28 family.

The sequence is that of Large ribosomal subunit protein bL28 from Bradyrhizobium sp. (strain BTAi1 / ATCC BAA-1182).